The sequence spans 296 residues: MNINEIRKERQKWMQWKNIAPLREVIEHLGDVTCSVELGDVVTIKGKPLKNIEDTARLMMPWRKGPFEVFGTYIDSEWRSNIKYNLLRKHFNLKDRRVADIGCNNGYYLFRMQEDAPKLLVGFDPSPLFKTQFDFINRFVKSDIVYELLGVEHLEFYEDKFDTIFCLGVLYHRSDPVSMLKSLYKGLDKEGEVILDTFYIEGDEEICLSPASSYSKIPNIYFVPTISALKNWCLRAGFSSFEVLETSLTSSDEQRKTSWIEGESLEDFLDKNDNTKTVEGYPAPSRVYVRLKKGIK.

Carboxy-S-adenosyl-L-methionine contacts are provided by residues Lys64, Trp78, Lys83, Gly102, 124 to 126 (DPS), 151 to 152 (VE), Tyr171, and Arg286.

Belongs to the class I-like SAM-binding methyltransferase superfamily. CmoB family. In terms of assembly, homotetramer.

The enzyme catalyses carboxy-S-adenosyl-L-methionine + 5-hydroxyuridine(34) in tRNA = 5-carboxymethoxyuridine(34) in tRNA + S-adenosyl-L-homocysteine + H(+). Catalyzes carboxymethyl transfer from carboxy-S-adenosyl-L-methionine (Cx-SAM) to 5-hydroxyuridine (ho5U) to form 5-carboxymethoxyuridine (cmo5U) at position 34 in tRNAs. In Sulfurimonas denitrificans (strain ATCC 33889 / DSM 1251) (Thiomicrospira denitrificans (strain ATCC 33889 / DSM 1251)), this protein is tRNA U34 carboxymethyltransferase.